A 506-amino-acid polypeptide reads, in one-letter code: Cysteine--tRNA ligase (506 aa).

C34 provides a ligand contact to Zn(2+). The short motif at 36–46 (PTVYDFAHIGN) is the 'HIGH' region element. 3 residues coordinate Zn(2+): C230, H269, and E273. The short motif at 302 to 306 (KMSKS) is the 'KMSKS' region element. K305 lines the ATP pocket.

The protein belongs to the class-I aminoacyl-tRNA synthetase family. Monomer. The cofactor is Zn(2+).

Its subcellular location is the cytoplasm. It catalyses the reaction tRNA(Cys) + L-cysteine + ATP = L-cysteinyl-tRNA(Cys) + AMP + diphosphate. In Brucella suis biovar 1 (strain 1330), this protein is Cysteine--tRNA ligase.